Reading from the N-terminus, the 173-residue chain is RNA pyrophosphohydrolase (173 aa).

The Nudix hydrolase domain occupies 11-164; the sequence is PYRRCVGVVV…KKHVYRKVVS (154 aa). A Nudix box motif is present at residues 52–73; it reads GGIDEGEEPLDAACRELYEETG.

The protein belongs to the Nudix hydrolase family. RppH subfamily. A divalent metal cation is required as a cofactor.

In terms of biological role, accelerates the degradation of transcripts by removing pyrophosphate from the 5'-end of triphosphorylated RNA, leading to a more labile monophosphorylated state that can stimulate subsequent ribonuclease cleavage. This chain is RNA pyrophosphohydrolase, found in Bartonella quintana (strain Toulouse) (Rochalimaea quintana).